The primary structure comprises 469 residues: Glutamate--tRNA ligase (469 aa).

Positions 11–21 match the 'HIGH' region motif; that stretch reads PSPTGFIHLGN. The span at 118–131 shows a compositional bias: basic and acidic residues; it reads GEKPRYDGTWRPEP. Residues 118–138 form a disordered region; it reads GEKPRYDGTWRPEPGKVLPEP. A 'KMSKS' region motif is present at residues 243–247; the sequence is KMSKR. ATP is bound at residue lysine 246.

This sequence belongs to the class-I aminoacyl-tRNA synthetase family. Glutamate--tRNA ligase type 1 subfamily. Monomer.

It is found in the cytoplasm. The catalysed reaction is tRNA(Glu) + L-glutamate + ATP = L-glutamyl-tRNA(Glu) + AMP + diphosphate. Functionally, catalyzes the attachment of glutamate to tRNA(Glu) in a two-step reaction: glutamate is first activated by ATP to form Glu-AMP and then transferred to the acceptor end of tRNA(Glu). The polypeptide is Glutamate--tRNA ligase (Burkholderia thailandensis (strain ATCC 700388 / DSM 13276 / CCUG 48851 / CIP 106301 / E264)).